The primary structure comprises 306 residues: Aspartate carbamoyltransferase catalytic subunit (306 aa).

2 residues coordinate carbamoyl phosphate: Arg51 and Thr52. Residue Lys80 participates in L-aspartate binding. Residues Arg101, His129, and Gln132 each coordinate carbamoyl phosphate. 2 residues coordinate L-aspartate: Arg162 and Arg224. The carbamoyl phosphate site is built by Leu263 and Pro264.

It belongs to the aspartate/ornithine carbamoyltransferase superfamily. ATCase family. Heterododecamer (2C3:3R2) of six catalytic PyrB chains organized as two trimers (C3), and six regulatory PyrI chains organized as three dimers (R2).

It carries out the reaction carbamoyl phosphate + L-aspartate = N-carbamoyl-L-aspartate + phosphate + H(+). The protein operates within pyrimidine metabolism; UMP biosynthesis via de novo pathway; (S)-dihydroorotate from bicarbonate: step 2/3. Catalyzes the condensation of carbamoyl phosphate and aspartate to form carbamoyl aspartate and inorganic phosphate, the committed step in the de novo pyrimidine nucleotide biosynthesis pathway. The chain is Aspartate carbamoyltransferase catalytic subunit from Parabacteroides distasonis (strain ATCC 8503 / DSM 20701 / CIP 104284 / JCM 5825 / NCTC 11152).